Consider the following 76-residue polypeptide: Theta defensin subunit B (76 aa).

The N-terminal stretch at 1–22 (MRTFALLTAMLLLVALQPQAEA) is a signal peptide. The propeptide occupies 23-64 (RQARADEAAAQQQPGADDQGMAHSFTRPENAALPLSESAKGL). Positions 24 to 54 (QARADEAAAQQQPGADDQGMAHSFTRPENAA) are disordered. Residues 30–44 (AAAQQQPGADDQGMA) are compositionally biased toward low complexity. A Cyclopeptide (Arg-Cys) (interchain with C-73 in subunit A); in form BTD-1 cross-link involves residue Arg65. A Cyclopeptide (Arg-Cys) (interchain with C-73 in subunit B); in form BTD-2 cross-link involves residue Arg65. Cys68 and Cys73 are disulfide-bonded. Cys73 participates in a covalent cross-link: Cyclopeptide (Cys-Arg) (interchain with R-65 in subunit A); in form BTD-1. Cys73 is covalently cross-linked (Cyclopeptide (Cys-Arg) (interchain with R-65 in subunit B); in form BTD-2). Residues 74–76 (QLL) constitute a propeptide that is removed on maturation.

The protein belongs to the alpha-defensin family. Theta subfamily. In terms of assembly, BTD-1 is a cyclic heterodimer composed of subunits A and B; disulfide-linked. BTD-2 is a cyclic homodimer composed of two subunits B; disulfide-linked. Forms a cyclic peptide with subunit A (BTD-1), or subunit B (BTD-2). An additional intersubunit disulfide bond is formed.

Its function is as follows. BTD-1 and BTD-2 have antimicrobial activity against the Gram-negative bacterium E.coli ML35, the Gram-positive bacterium S.aureus 502a, and the fungus C.albicans 16820. BTD-2 is more effective against E.coli than BTD-1. The sequence is that of Theta defensin subunit B (BTDB) from Papio anubis (Olive baboon).